A 345-amino-acid chain; its full sequence is UDP-N-acetylenolpyruvoylglucosamine reductase (345 aa).

The region spanning 16–186 is the FAD-binding PCMH-type domain; sequence LPAYASNVIS…VSVGIKLMKS (171 aa). The active site involves Arg162. Ser232 functions as the Proton donor in the catalytic mechanism. Glu328 is a catalytic residue.

It belongs to the MurB family. FAD serves as cofactor.

Its subcellular location is the cytoplasm. The enzyme catalyses UDP-N-acetyl-alpha-D-muramate + NADP(+) = UDP-N-acetyl-3-O-(1-carboxyvinyl)-alpha-D-glucosamine + NADPH + H(+). The protein operates within cell wall biogenesis; peptidoglycan biosynthesis. In terms of biological role, cell wall formation. In Yersinia pestis, this protein is UDP-N-acetylenolpyruvoylglucosamine reductase.